The sequence spans 112 residues: cAMP-regulated phosphoprotein 19 (112 aa).

A compositionally biased stretch (low complexity) spans 1–11; it reads MSAESPEPASA. Residues 1-49 form a disordered region; the sequence is MSAESPEPASAEEQKEMEDKVLSPEKAEEAKLKARYPHLGQKPGGSDFL. Over residues 12–32 the composition is skewed to basic and acidic residues; it reads EEQKEMEDKVLSPEKAEEAKL. Ser62 and Ser104 each carry phosphoserine; by GWL. The interval 72 to 112 is disordered; the sequence is MKNKQLPTAAPDKTEVTGDHIPTPQDLPQRKPSLVASKLAG. Ser104 carries the phosphoserine; by PKA modification.

It belongs to the endosulfine family. In terms of assembly, interacts (when phosphorylated at Ser-62) with PPP2R2D. Phosphorylation at Ser-62 by MASTL/GWL during mitosis is essential for interaction with PPP2R2D (PR55-delta) and subsequent inactivation of PP2A.

Its subcellular location is the cytoplasm. Functionally, protein phosphatase inhibitor that specifically inhibits protein phosphatase 2A (PP2A) during mitosis. Inhibition of PP2A is enhanced when ARPP19 is phosphorylated. When phosphorylated at Ser-62 during mitosis, specifically interacts with PPP2R2D (PR55-delta) and inhibits its activity, leading to inactivation of PP2A, an essential condition to keep cyclin-B1-CDK1 activity high during M phase. The polypeptide is cAMP-regulated phosphoprotein 19 (ARPP19) (Taeniopygia guttata (Zebra finch)).